Here is a 424-residue protein sequence, read N- to C-terminus: Elongation factor 1-alpha (424 aa).

The tr-type G domain maps to 5 to 223 (KPHMNLVIIG…NALQVPAKPV (219 aa)). The tract at residues 14–21 (GHVDHGKS) is G1. 14–21 (GHVDHGKS) contacts GTP. Residue Ser21 participates in Mg(2+) binding. The tract at residues 70–74 (GVTID) is G2. The G3 stretch occupies residues 91-94 (DAPG). Residues 91 to 95 (DAPGH) and 148 to 151 (NKMD) contribute to the GTP site. Positions 148–151 (NKMD) are G4. Residues 187–189 (SGY) form a G5 region.

It belongs to the TRAFAC class translation factor GTPase superfamily. Classic translation factor GTPase family. EF-Tu/EF-1A subfamily.

The protein localises to the cytoplasm. It carries out the reaction GTP + H2O = GDP + phosphate + H(+). Its function is as follows. GTP hydrolase that promotes the GTP-dependent binding of aminoacyl-tRNA to the A-site of ribosomes during protein biosynthesis. In Picrophilus torridus (strain ATCC 700027 / DSM 9790 / JCM 10055 / NBRC 100828 / KAW 2/3), this protein is Elongation factor 1-alpha.